The chain runs to 107 residues: Serine-rich and transmembrane domain-containing protein 1 (107 aa).

The helical transmembrane segment at 43–63 (IYVSIFLSLLAFLLLLLIIAL) threads the bilayer.

It is found in the membrane. In Homo sapiens (Human), this protein is Serine-rich and transmembrane domain-containing protein 1 (SERTM1).